A 1098-amino-acid chain; its full sequence is Protein translocase subunit SecA (1098 aa).

ATP-binding positions include Gln-176, 194-198 (GEGKT), and Asp-696. Residues 1024 to 1098 (EPEQVREAAP…KYKNCHGQNA (75 aa)) form a disordered region. 2 stretches are compositionally biased toward basic and acidic residues: residues 1041-1051 (QYREEKQDLSD) and 1058-1077 (AEHD…KTVG). Cys-1082, Cys-1084, Cys-1093, and His-1094 together coordinate Zn(2+).

It belongs to the SecA family. In terms of assembly, monomer and homodimer. Part of the essential Sec protein translocation apparatus which comprises SecA, SecYEG and auxiliary proteins SecDF. Other proteins may also be involved. Requires Zn(2+) as cofactor.

It is found in the cell inner membrane. The protein localises to the cytoplasm. It catalyses the reaction ATP + H2O + cellular proteinSide 1 = ADP + phosphate + cellular proteinSide 2.. Its function is as follows. Part of the Sec protein translocase complex. Interacts with the SecYEG preprotein conducting channel. Has a central role in coupling the hydrolysis of ATP to the transfer of proteins into and across the cell membrane, serving as an ATP-driven molecular motor driving the stepwise translocation of polypeptide chains across the membrane. This chain is Protein translocase subunit SecA, found in Phocaeicola vulgatus (strain ATCC 8482 / DSM 1447 / JCM 5826 / CCUG 4940 / NBRC 14291 / NCTC 11154) (Bacteroides vulgatus).